Reading from the N-terminus, the 206-residue chain is Pyridoxine/pyridoxamine 5'-phosphate oxidase (206 aa).

FMN-binding positions include 53–58, 68–69, lysine 75, and glutamine 97; these read RMVLLK and YT. Lysine 58 is a substrate binding site. 3 residues coordinate substrate: tyrosine 115, arginine 119, and serine 123. FMN is bound by residues 132-133 and tryptophan 177; that span reads QS. 183 to 185 provides a ligand contact to substrate; that stretch reads RLH. Residue arginine 187 coordinates FMN.

This sequence belongs to the pyridoxamine 5'-phosphate oxidase family. Homodimer. The cofactor is FMN.

It catalyses the reaction pyridoxamine 5'-phosphate + O2 + H2O = pyridoxal 5'-phosphate + H2O2 + NH4(+). The catalysed reaction is pyridoxine 5'-phosphate + O2 = pyridoxal 5'-phosphate + H2O2. It functions in the pathway cofactor metabolism; pyridoxal 5'-phosphate salvage; pyridoxal 5'-phosphate from pyridoxamine 5'-phosphate: step 1/1. Its pathway is cofactor metabolism; pyridoxal 5'-phosphate salvage; pyridoxal 5'-phosphate from pyridoxine 5'-phosphate: step 1/1. In terms of biological role, catalyzes the oxidation of either pyridoxine 5'-phosphate (PNP) or pyridoxamine 5'-phosphate (PMP) into pyridoxal 5'-phosphate (PLP). The polypeptide is Pyridoxine/pyridoxamine 5'-phosphate oxidase (Rhizobium leguminosarum bv. trifolii (strain WSM2304)).